A 307-amino-acid chain; its full sequence is tRNA pseudouridine synthase B (307 aa).

Catalysis depends on Asp-45, which acts as the Nucleophile.

It belongs to the pseudouridine synthase TruB family. Type 1 subfamily.

It catalyses the reaction uridine(55) in tRNA = pseudouridine(55) in tRNA. Functionally, responsible for synthesis of pseudouridine from uracil-55 in the psi GC loop of transfer RNAs. This chain is tRNA pseudouridine synthase B, found in Heliobacterium mobile (Heliobacillus mobilis).